We begin with the raw amino-acid sequence, 199 residues long: Female-specific protein transformer (199 aa).

2 disordered regions span residues 1–121 and 178–199; these read MDAD…RTPR and YRAG…QAPN. Basic and acidic residues predominate over residues 20–37; sequence REKMPYFADEVRERDRVR. Basic residues-rich tracts occupy residues 56 to 69, 77 to 92, and 102 to 119; these read RRSR…RSRT, CQRR…RSGS, and SRRR…RSRT.

It localises to the nucleus speckle. Member of the regulatory pathway controlling female somatic sexual differentiation, regulated by Sxl. Activates dsx female-specific splicing by promoting the formation of a splicing enhancer complex which consists of tra, tra2 and sr proteins. This chain is Female-specific protein transformer (tra), found in Drosophila virilis (Fruit fly).